A 304-amino-acid chain; its full sequence is Protein ML (304 aa).

Functionally, blocks host IRF3 and IRF7, thereby inhibiting IFN-beta expression and activation of host antiviral state. The sequence is that of Protein ML from Thogoto virus (isolate SiAr 126) (Tho).